Consider the following 424-residue polypeptide: Serine hydroxymethyltransferase (424 aa).

Residues leucine 123 and 127-129 each bind (6S)-5,6,7,8-tetrahydrofolate; that span reads GHL. Position 232 is an N6-(pyridoxal phosphate)lysine (lysine 232). Residue glutamate 245 coordinates (6S)-5,6,7,8-tetrahydrofolate.

Belongs to the SHMT family. Homodimer. It depends on pyridoxal 5'-phosphate as a cofactor.

The protein resides in the cytoplasm. The catalysed reaction is (6R)-5,10-methylene-5,6,7,8-tetrahydrofolate + glycine + H2O = (6S)-5,6,7,8-tetrahydrofolate + L-serine. Its pathway is one-carbon metabolism; tetrahydrofolate interconversion. The protein operates within amino-acid biosynthesis; glycine biosynthesis; glycine from L-serine: step 1/1. Its function is as follows. Catalyzes the reversible interconversion of serine and glycine with tetrahydrofolate (THF) serving as the one-carbon carrier. This reaction serves as the major source of one-carbon groups required for the biosynthesis of purines, thymidylate, methionine, and other important biomolecules. Also exhibits THF-independent aldolase activity toward beta-hydroxyamino acids, producing glycine and aldehydes, via a retro-aldol mechanism. The chain is Serine hydroxymethyltransferase from Kocuria rhizophila (strain ATCC 9341 / DSM 348 / NBRC 103217 / DC2201).